Reading from the N-terminus, the 246-residue chain is Dihydroorotate dehydrogenase B (NAD(+)), electron transfer subunit (246 aa).

Residues 3–95 enclose the FAD-binding FR-type domain; it reads MEYFKGKVKE…IGPLGNGFDI (93 aa). Residues 48–51 and 70–71 contribute to the FAD site; these read RPIS and GT. [2Fe-2S] cluster-binding residues include C213, C218, C221, and C233.

The protein belongs to the PyrK family. As to quaternary structure, heterotetramer of 2 PyrK and 2 PyrD type B subunits. [2Fe-2S] cluster is required as a cofactor. Requires FAD as cofactor.

It functions in the pathway pyrimidine metabolism; UMP biosynthesis via de novo pathway; orotate from (S)-dihydroorotate (NAD(+) route): step 1/1. Its function is as follows. Responsible for channeling the electrons from the oxidation of dihydroorotate from the FMN redox center in the PyrD type B subunit to the ultimate electron acceptor NAD(+). This Clostridium perfringens (strain 13 / Type A) protein is Dihydroorotate dehydrogenase B (NAD(+)), electron transfer subunit.